A 636-amino-acid chain; its full sequence is 1-deoxy-D-xylulose-5-phosphate synthase (636 aa).

Residues histidine 74 and 115 to 117 (GHA) contribute to the thiamine diphosphate site. Aspartate 146 lines the Mg(2+) pocket. Residues 147 to 148 (GA), asparagine 175, tyrosine 285, and glutamate 368 contribute to the thiamine diphosphate site. Asparagine 175 contributes to the Mg(2+) binding site.

This sequence belongs to the transketolase family. DXPS subfamily. In terms of assembly, homodimer. Mg(2+) is required as a cofactor. The cofactor is thiamine diphosphate.

The catalysed reaction is D-glyceraldehyde 3-phosphate + pyruvate + H(+) = 1-deoxy-D-xylulose 5-phosphate + CO2. The protein operates within metabolic intermediate biosynthesis; 1-deoxy-D-xylulose 5-phosphate biosynthesis; 1-deoxy-D-xylulose 5-phosphate from D-glyceraldehyde 3-phosphate and pyruvate: step 1/1. Its function is as follows. Catalyzes the acyloin condensation reaction between C atoms 2 and 3 of pyruvate and glyceraldehyde 3-phosphate to yield 1-deoxy-D-xylulose-5-phosphate (DXP). This chain is 1-deoxy-D-xylulose-5-phosphate synthase, found in Anaeromyxobacter sp. (strain K).